Here is a 366-residue protein sequence, read N- to C-terminus: Spermine synthase (366 aa).

Ala2 bears the N-acetylalanine mark. Ser57 carries the post-translational modification Phosphoserine. The region spanning 122–362 (RYWPTADGRL…ELWVFYTVWK (241 aa)) is the PABS domain. Residue Gln148 coordinates S-adenosyl 3-(methylsulfanyl)propylamine. Spermidine is bound by residues Tyr177 and Asp201. S-adenosyl 3-(methylsulfanyl)propylamine is bound by residues Glu220 and 255-256 (DC). The active-site Proton acceptor is Asp276. Residues Tyr351 and Glu353 each contribute to the spermidine site.

It belongs to the spermidine/spermine synthase family. As to quaternary structure, homodimer. Dimerization is mediated through the N-terminal domain and seems to be required for activity as deletion of the N-terminal domain causes complete loss of activity.

The enzyme catalyses S-adenosyl 3-(methylsulfanyl)propylamine + spermidine = spermine + S-methyl-5'-thioadenosine + H(+). It functions in the pathway amine and polyamine biosynthesis; spermine biosynthesis; spermine from spermidine: step 1/1. Catalyzes the production of spermine from spermidine and decarboxylated S-adenosylmethionine (dcSAM). Required for normal viability, growth and fertility. This Mus musculus (Mouse) protein is Spermine synthase (Sms).